The primary structure comprises 195 residues: Probable GTP-binding protein EngB (195 aa).

Positions 22-195 (GLPEIALAGR…WGAIKKMISR (174 aa)) constitute an EngB-type G domain. GTP-binding positions include 30 to 37 (GRSNVGKS), 57 to 61 (GKTQT), 75 to 78 (DVPG), 142 to 145 (TKAD), and 174 to 176 (FSS). Mg(2+) contacts are provided by S37 and T59.

The protein belongs to the TRAFAC class TrmE-Era-EngA-EngB-Septin-like GTPase superfamily. EngB GTPase family. Mg(2+) is required as a cofactor.

Functionally, necessary for normal cell division and for the maintenance of normal septation. The protein is Probable GTP-binding protein EngB of Bacillus velezensis (strain DSM 23117 / BGSC 10A6 / LMG 26770 / FZB42) (Bacillus amyloliquefaciens subsp. plantarum).